The sequence spans 205 residues: MKKIVIVISILLTSFLSSAVSAATDSQLLKEKLAKFSFINAEFSQQVSSPEGKILDDSQGMLAISRPGKFRWEVLMPEEELIVSDGQTMWMYSPFIEQVTLLNLSDAIQGTPFILLSGANESQWADYQVNKVNDQFIVKNIAGTVQDRSFIFEFNKSSQVSKFVVIEALGQRSEFKLSHKVLSKPWVEGFFDFSIPAGVEIDDQR.

The first 22 residues, M1–A22, serve as a signal peptide directing secretion.

Belongs to the LolA family. Monomer.

It localises to the periplasm. Its function is as follows. Participates in the translocation of lipoproteins from the inner membrane to the outer membrane. Only forms a complex with a lipoprotein if the residue after the N-terminal Cys is not an aspartate (The Asp acts as a targeting signal to indicate that the lipoprotein should stay in the inner membrane). The protein is Outer-membrane lipoprotein carrier protein of Psychromonas ingrahamii (strain DSM 17664 / CCUG 51855 / 37).